The sequence spans 97 residues: Small ribosomal subunit protein bS6 (97 aa).

This sequence belongs to the bacterial ribosomal protein bS6 family.

Functionally, binds together with bS18 to 16S ribosomal RNA. The protein is Small ribosomal subunit protein bS6 of Dictyoglomus turgidum (strain DSM 6724 / Z-1310).